A 320-amino-acid polypeptide reads, in one-letter code: MQNRNTFSWVKDQMSRFISVSIMIYVITRTSISNAYPIFAQQGYENPREATGRIVCANCHLANKPVDIEVPQAVLPDTVFEAVVRIPYDMQLKQVLANGKKGGLNVGAVLILPEGFELAPPDRISPEMKEKIGNLSFQSYRPNKKNILIMGPVPGKKYSQIVFPILSPDPATKKDVHFLKYPIYVGGNRGRGQIYPDGSKSNNTVYNATATGIVSKIVRKEKGGYEITIADTADGHQVVDIIPPGPELLVSEGESIKIDQPLTSNPNVGGFGQGDAEIVLQDPLRVQGLLFFFASVILAQIFLVLKKKQFEKVQLSEMNF.

A signal peptide spans 1-35 (MQNRNTFSWVKDQMSRFISVSIMIYVITRTSISNA). The heme site is built by tyrosine 36, cysteine 56, cysteine 59, and histidine 60. A helical transmembrane segment spans residues 286 to 306 (VQGLLFFFASVILAQIFLVLK).

The protein belongs to the cytochrome f family. In terms of assembly, the 4 large subunits of the cytochrome b6-f complex are cytochrome b6, subunit IV (17 kDa polypeptide, petD), cytochrome f and the Rieske protein, while the 4 small subunits are PetG, PetL, PetM and PetN. The complex functions as a dimer. It depends on heme as a cofactor.

It is found in the plastid. It localises to the chloroplast thylakoid membrane. In terms of biological role, component of the cytochrome b6-f complex, which mediates electron transfer between photosystem II (PSII) and photosystem I (PSI), cyclic electron flow around PSI, and state transitions. The chain is Cytochrome f from Ceratophyllum demersum (Rigid hornwort).